We begin with the raw amino-acid sequence, 617 residues long: V-type proton ATPase catalytic subunit A (617 aa).

250–257 (GAFGCGKT) contacts ATP. The residue at position 384 (Ser384) is a Phosphoserine; by AMPK.

The protein belongs to the ATPase alpha/beta chains family. V-ATPase is a heteromultimeric enzyme made up of two complexes: the ATP-hydrolytic V1 complex and the proton translocation V0 complex. The V1 complex consists of three catalytic AB heterodimers that form a heterohexamer, three peripheral stalks each consisting of EG heterodimers, one central rotor including subunits D and F, and the regulatory subunits C and H. The proton translocation complex V0 consists of the proton transport subunit a, a ring of proteolipid subunits c9c'', rotary subunit d, subunits e and f, and the accessory subunits ATP6AP1/Ac45 and ATP6AP2/PRR. Interacts with the V0 complex V-ATPase subunit a4 ATP6V0A4. Interacts with WFS1. Interacts with alpha-crystallin B chain/CRYAB and with MTOR, forming a ternary complex. Post-translationally, phosphorylation at Ser-384 by AMPK down-regulates its enzyme activity.

The protein resides in the cytoplasm. Its subcellular location is the cytosol. It localises to the cytoplasmic vesicle. The protein localises to the secretory vesicle. It is found in the clathrin-coated vesicle membrane. The protein resides in the lysosome. It carries out the reaction ATP + H2O + 4 H(+)(in) = ADP + phosphate + 5 H(+)(out). ATP hydrolysis occurs at the interface between the nucleotide-binding domains of subunits A and B. ATP hydrolysis triggers a conformational change in the subunits D and F, which induces a shift of subunit d. The c-ring is subsequently rotated and results in a continuous proton translocation across the membrane. In terms of biological role, catalytic subunit of the V1 complex of vacuolar(H+)-ATPase (V-ATPase), a multisubunit enzyme composed of a peripheral complex (V1) that hydrolyzes ATP and a membrane integral complex (V0) that translocates protons. V-ATPase is responsible for acidifying and maintaining the pH of intracellular compartments and in some cell types, is targeted to the plasma membrane, where it is responsible for acidifying the extracellular environment. In aerobic conditions, involved in intracellular iron homeostasis, thus triggering the activity of Fe(2+) prolyl hydroxylase (PHD) enzymes, and leading to HIF1A hydroxylation and subsequent proteasomal degradation. May play a role in neurite development and synaptic connectivity. In Mus musculus (Mouse), this protein is V-type proton ATPase catalytic subunit A (Atp6v1a).